Consider the following 562-residue polypeptide: Arginine--tRNA ligase (562 aa).

The short motif at A129–H139 is the 'HIGH' region element.

Belongs to the class-I aminoacyl-tRNA synthetase family. In terms of assembly, monomer.

It is found in the cytoplasm. The catalysed reaction is tRNA(Arg) + L-arginine + ATP = L-arginyl-tRNA(Arg) + AMP + diphosphate. The polypeptide is Arginine--tRNA ligase (argS) (Xylella fastidiosa (strain 9a5c)).